A 307-amino-acid chain; its full sequence is Woronin sorting complex protein (307 aa).

3 helical membrane passes run 106-125 (MATY…IWIL), 146-167 (NLIV…IAGA), and 207-227 (AWMP…NYIT). The span at 241-264 (GDGAHGDHRHDRERERDRERERHS) shows a compositional bias: basic and acidic residues. The disordered stretch occupies residues 241–307 (GDGAHGDHRH…YPSLGQNPRY (67 aa)). The span at 266–278 (PPHGHGPSHGGRP) shows a compositional bias: low complexity.

It belongs to the peroxisomal membrane protein PXMP2/4 family. Self-assembles into detergent-resistant oligomers and forms a complex with hex-1 assemblies.

It is found in the peroxisome membrane. The protein localises to the cell septum. Functionally, woronin sorting complex protein involved in both Woronin bodies (WB) formation and inherence. Localizes to large peroxisome membranes where it self-assembles into detergent-resistant oligomers that envelop hex-1 assemblies, producing asymmetrical nascent WBs. These structures are then delivered to the cell cortex, which permits partitioning of the nascent WB and WB inheritance. The sequence is that of Woronin sorting complex protein from Neurospora crassa (strain ATCC 24698 / 74-OR23-1A / CBS 708.71 / DSM 1257 / FGSC 987).